The primary structure comprises 112 residues: ATP synthase subunit c (112 aa).

A run of 2 helical transmembrane segments spans residues 36–56 and 81–101; these read FSVLAAGLGLGVAALGGAIGM and MFIALAMIEAQVIYALVIALI.

Belongs to the ATPase C chain family. F-type ATPases have 2 components, F(1) - the catalytic core - and F(0) - the membrane proton channel. F(1) has five subunits: alpha(3), beta(3), gamma(1), delta(1), epsilon(1). F(0) has three main subunits: a(1), b(2) and c(10-14). The alpha and beta chains form an alternating ring which encloses part of the gamma chain. F(1) is attached to F(0) by a central stalk formed by the gamma and epsilon chains, while a peripheral stalk is formed by the delta and b chains.

The protein resides in the cell inner membrane. In terms of biological role, f(1)F(0) ATP synthase produces ATP from ADP in the presence of a proton or sodium gradient. F-type ATPases consist of two structural domains, F(1) containing the extramembraneous catalytic core and F(0) containing the membrane proton channel, linked together by a central stalk and a peripheral stalk. During catalysis, ATP synthesis in the catalytic domain of F(1) is coupled via a rotary mechanism of the central stalk subunits to proton translocation. Its function is as follows. Key component of the F(0) channel; it plays a direct role in translocation across the membrane. A homomeric c-ring of between 10-14 subunits forms the central stalk rotor element with the F(1) delta and epsilon subunits. The protein is ATP synthase subunit c of Campylobacter jejuni subsp. doylei (strain ATCC BAA-1458 / RM4099 / 269.97).